The sequence spans 165 residues: Protein-export protein SecB (165 aa).

It belongs to the SecB family. As to quaternary structure, homotetramer, a dimer of dimers. One homotetramer interacts with 1 SecA dimer.

It is found in the cytoplasm. Functionally, one of the proteins required for the normal export of preproteins out of the cell cytoplasm. It is a molecular chaperone that binds to a subset of precursor proteins, maintaining them in a translocation-competent state. It also specifically binds to its receptor SecA. In Colwellia psychrerythraea (strain 34H / ATCC BAA-681) (Vibrio psychroerythus), this protein is Protein-export protein SecB.